Here is an 830-residue protein sequence, read N- to C-terminus: Cadherin-16 (830 aa).

An N-terminal signal peptide occupies residues 1 to 21 (MISARPWLLYLSVIQAFTTEA). Topologically, residues 22–788 (QPAESLHTEV…MKGMPTKLSA (767 aa)) are extracellular. Cadherin domains lie at 27–128 (LHTE…VPQF), 133–237 (YRAQ…SIVE), 244–338 (EPVH…APVC), 343–451 (PTVN…APEF), 457–566 (GPVT…PLKL), and 571–667 (YETS…VPAL). Asn519, Asn604, and Asn724 each carry an N-linked (GlcNAc...) asparagine glycan. The tract at residues 668–788 (TLSAGPSRHL…MKGMPTKLSA (121 aa)) is ectodomain G. A helical membrane pass occupies residues 789–809 (VGVLLGTLAAIGFILILVFTH). The Cytoplasmic segment spans residues 810 to 830 (LALARKDLDQPADSVPLKAAV). Ser823 carries the phosphoserine modification.

Kidney specific.

Its subcellular location is the cell membrane. Cadherins are calcium-dependent cell adhesion proteins. They preferentially interact with themselves in a homophilic manner in connecting cells; cadherins may thus contribute to the sorting of heterogeneous cell types. The chain is Cadherin-16 (Cdh16) from Mus musculus (Mouse).